We begin with the raw amino-acid sequence, 81 residues long: Putative membrane protein insertion efficiency factor (81 aa).

This sequence belongs to the UPF0161 family.

It is found in the cell inner membrane. Its function is as follows. Could be involved in insertion of integral membrane proteins into the membrane. The polypeptide is Putative membrane protein insertion efficiency factor (Pseudomonas savastanoi pv. phaseolicola (strain 1448A / Race 6) (Pseudomonas syringae pv. phaseolicola (strain 1448A / Race 6))).